The following is a 372-amino-acid chain: Glutamate 5-kinase (372 aa).

Residue K14 participates in ATP binding. The substrate site is built by S54, D141, and N153. T173–D174 serves as a coordination point for ATP. Residues R280–M358 form the PUA domain.

Belongs to the glutamate 5-kinase family.

The protein localises to the cytoplasm. The enzyme catalyses L-glutamate + ATP = L-glutamyl 5-phosphate + ADP. Its pathway is amino-acid biosynthesis; L-proline biosynthesis; L-glutamate 5-semialdehyde from L-glutamate: step 1/2. Catalyzes the transfer of a phosphate group to glutamate to form L-glutamate 5-phosphate. This is Glutamate 5-kinase from Pseudomonas syringae pv. syringae (strain B728a).